Here is a 180-residue protein sequence, read N- to C-terminus: Formate hydrogenlyase subunit 6 (180 aa).

4Fe-4S ferredoxin-type domains lie at 31-60 (GKPE…VETD) and 66-95 (LAWE…LSQE). 8 residues coordinate [4Fe-4S] cluster: C40, C43, C46, C50, C75, C78, C81, and C85.

FHL comprises of a formate dehydrogenase, unidentified electron carriers and a hydrogenase (isoenzyme 3). In this non-energy conserving pathway, molecular hydrogen and carbodioxide are released from formate.

Its function is as follows. Probable electron transfer protein for hydrogenase 3. This is Formate hydrogenlyase subunit 6 (hycF) from Escherichia coli (strain K12).